The primary structure comprises 24 residues: Coenzyme PQQ synthesis protein A (24 aa).

Residues 16-20 (EITMY) constitute a cross-link (pyrroloquinoline quinone (Glu-Tyr)).

Belongs to the PqqA family.

The protein operates within cofactor biosynthesis; pyrroloquinoline quinone biosynthesis. Required for coenzyme pyrroloquinoline quinone (PQQ) biosynthesis. PQQ is probably formed by cross-linking a specific glutamate to a specific tyrosine residue and excising these residues from the peptide. The polypeptide is Coenzyme PQQ synthesis protein A (Burkholderia cenocepacia (strain ATCC BAA-245 / DSM 16553 / LMG 16656 / NCTC 13227 / J2315 / CF5610) (Burkholderia cepacia (strain J2315))).